The sequence spans 794 residues: ALG-2 interacting protein X (794 aa).

The BRO1 domain occupies 1-385; sequence MLSIERKRTE…DNIEFHNQSA (385 aa). Coiled coils occupy residues 499-568 and 600-655; these read SFIR…LCKK and LNES…NLDE. A disordered region spans residues 695 to 794; that stretch reads GVNPHSPLTS…PPYNSNNKHY (100 aa). Positions 698–712 are enriched in low complexity; sequence PHSPLTSPSPSLQSP. The segment covering 713 to 722 has biased composition (polar residues); it reads VNNYPNQFSS. Low complexity-rich tracts occupy residues 723–742 and 749–764; these read PQYH…YVPS and YSYN…QFGG. A compositionally biased stretch (pro residues) spans 765–787; it reads PLPPPQSFSAPPPPQSFTAPPPY.

Self-associates; the interaction is calcium-independent Interacts with pefa; the interaction is calcium-dependent. Interacts with pefb; the interaction is calcium-dependent.

Its subcellular location is the cytoplasm. It localises to the cytoplasmic vesicle membrane. It is found in the endosome. Unknown. Required for development but not for cell death. This chain is ALG-2 interacting protein X (alxA), found in Dictyostelium discoideum (Social amoeba).